The following is a 409-amino-acid chain: Probable ATP-dependent RNA helicase MG308 homolog (409 aa).

Positions 26 to 179 (VFKVWPRQNV…RKQVAPLTVV (154 aa)) constitute a Helicase ATP-binding domain. 39-46 (AETGSGKT) is an ATP binding site. The DEVD box signature appears at 126-129 (DEVD). Positions 190-349 (LVKHFLLNLN…SVHLERDGTL (160 aa)) constitute a Helicase C-terminal domain.

It belongs to the DEAD box helicase family.

It carries out the reaction ATP + H2O = ADP + phosphate + H(+). This chain is Probable ATP-dependent RNA helicase MG308 homolog, found in Mycoplasma pneumoniae (strain ATCC 29342 / M129 / Subtype 1) (Mycoplasmoides pneumoniae).